A 167-amino-acid polypeptide reads, in one-letter code: Gametocyte-specific factor 1 (167 aa).

Ser8 is modified (phosphoserine). CHHC U11-48K-type zinc fingers lie at residues 14 to 41 and 48 to 75; these read LLQC…RKNH and LATC…DDKS. Zn(2+) is bound by residues Cys17, His23, His33, Cys37, Cys51, His57, His67, and Cys71.

It belongs to the UPF0224 (FAM112) family. As to expression, expressed abundantly in adult testis, at moderate levels in unfertilized eggs and ovaries and weakly in embryonic stem cells.

The protein localises to the cytoplasm. Required for spermatogenesis and is involved in the suppression of retrotransposon transcription in male germ cells. In Mus musculus (Mouse), this protein is Gametocyte-specific factor 1.